Here is a 646-residue protein sequence, read N- to C-terminus: Protein real-time (646 aa).

The PRELI/MSF1 domain maps to 2–175 (VQKYESPVRI…FINELKKEGI (174 aa)). One can recognise a CRAL-TRIO domain in the interval 294 to 471 (TPVVVEKYFP…FLGGSCITMI (178 aa)). Positions 499 to 646 (HHGLYKSVDL…GFSSNSLQSR (148 aa)) constitute a GOLD domain.

Its subcellular location is the mitochondrion. This is Protein real-time from Aedes aegypti (Yellowfever mosquito).